Reading from the N-terminus, the 387-residue chain is Succinate--CoA ligase [ADP-forming] subunit beta (387 aa).

Positions 9 to 236 (RDLFESYGVP…AAAADPLEAK (228 aa)) constitute an ATP-grasp domain. ATP contacts are provided by residues Lys45, 52–54 (GRG), Ala94, and Glu99. Residues Asn191 and Asp205 each contribute to the Mg(2+) site. Substrate-binding positions include Asn256 and 318-320 (GIT).

Belongs to the succinate/malate CoA ligase beta subunit family. As to quaternary structure, heterotetramer of two alpha and two beta subunits. Mg(2+) is required as a cofactor.

It carries out the reaction succinate + ATP + CoA = succinyl-CoA + ADP + phosphate. The catalysed reaction is GTP + succinate + CoA = succinyl-CoA + GDP + phosphate. It participates in carbohydrate metabolism; tricarboxylic acid cycle; succinate from succinyl-CoA (ligase route): step 1/1. Its function is as follows. Succinyl-CoA synthetase functions in the citric acid cycle (TCA), coupling the hydrolysis of succinyl-CoA to the synthesis of either ATP or GTP and thus represents the only step of substrate-level phosphorylation in the TCA. The beta subunit provides nucleotide specificity of the enzyme and binds the substrate succinate, while the binding sites for coenzyme A and phosphate are found in the alpha subunit. In Clavibacter michiganensis subsp. michiganensis (strain NCPPB 382), this protein is Succinate--CoA ligase [ADP-forming] subunit beta.